The chain runs to 209 residues: Leucyl/phenylalanyl-tRNA--protein transferase (209 aa).

It belongs to the L/F-transferase family.

It localises to the cytoplasm. The enzyme catalyses N-terminal L-lysyl-[protein] + L-leucyl-tRNA(Leu) = N-terminal L-leucyl-L-lysyl-[protein] + tRNA(Leu) + H(+). It carries out the reaction N-terminal L-arginyl-[protein] + L-leucyl-tRNA(Leu) = N-terminal L-leucyl-L-arginyl-[protein] + tRNA(Leu) + H(+). The catalysed reaction is L-phenylalanyl-tRNA(Phe) + an N-terminal L-alpha-aminoacyl-[protein] = an N-terminal L-phenylalanyl-L-alpha-aminoacyl-[protein] + tRNA(Phe). Its function is as follows. Functions in the N-end rule pathway of protein degradation where it conjugates Leu, Phe and, less efficiently, Met from aminoacyl-tRNAs to the N-termini of proteins containing an N-terminal arginine or lysine. The protein is Leucyl/phenylalanyl-tRNA--protein transferase of Paramagnetospirillum magneticum (strain ATCC 700264 / AMB-1) (Magnetospirillum magneticum).